The chain runs to 198 residues: Nucleoid occlusion factor SlmA (198 aa).

In terms of domain architecture, HTH tetR-type spans 9 to 70; sequence RNRREEILQA…SLIEFIEDTL (62 aa). A DNA-binding region (H-T-H motif) is located at residues 33–52; that stretch reads TTAKLAANVGVSEAALYRHF. The stretch at 117-144 forms a coiled coil; sequence EQDRLQGRINQLFERIEAQLRQVLKERR.

This sequence belongs to the nucleoid occlusion factor SlmA family. Homodimer. Interacts with FtsZ.

It localises to the cytoplasm. The protein localises to the nucleoid. Functionally, required for nucleoid occlusion (NO) phenomenon, which prevents Z-ring formation and cell division over the nucleoid. Acts as a DNA-associated cell division inhibitor that binds simultaneously chromosomal DNA and FtsZ, and disrupts the assembly of FtsZ polymers. SlmA-DNA-binding sequences (SBS) are dispersed on non-Ter regions of the chromosome, preventing FtsZ polymerization at these regions. This chain is Nucleoid occlusion factor SlmA, found in Edwardsiella ictaluri (strain 93-146).